The primary structure comprises 140 residues: 6,7-dimethyl-8-ribityllumazine synthase (140 aa).

5-amino-6-(D-ribitylamino)uracil is bound by residues Phe-11, 42–44 (ALE), and 66–68 (VVI). 71–72 (ET) contributes to the (2S)-2-hydroxy-3-oxobutyl phosphate binding site. His-74 (proton donor) is an active-site residue. Residue Asn-98 participates in 5-amino-6-(D-ribitylamino)uracil binding. Position 112 (Arg-112) interacts with (2S)-2-hydroxy-3-oxobutyl phosphate.

It belongs to the DMRL synthase family.

The catalysed reaction is (2S)-2-hydroxy-3-oxobutyl phosphate + 5-amino-6-(D-ribitylamino)uracil = 6,7-dimethyl-8-(1-D-ribityl)lumazine + phosphate + 2 H2O + H(+). It functions in the pathway cofactor biosynthesis; riboflavin biosynthesis; riboflavin from 2-hydroxy-3-oxobutyl phosphate and 5-amino-6-(D-ribitylamino)uracil: step 1/2. Catalyzes the formation of 6,7-dimethyl-8-ribityllumazine by condensation of 5-amino-6-(D-ribitylamino)uracil with 3,4-dihydroxy-2-butanone 4-phosphate. This is the penultimate step in the biosynthesis of riboflavin. The polypeptide is 6,7-dimethyl-8-ribityllumazine synthase (Erythrobacter litoralis (strain HTCC2594)).